A 436-amino-acid polypeptide reads, in one-letter code: 3-ketoacyl-CoA thiolase (436 aa).

Residue cysteine 99 is the Acyl-thioester intermediate of the active site. Catalysis depends on proton acceptor residues histidine 392 and cysteine 422.

Belongs to the thiolase-like superfamily. Thiolase family. Heterotetramer of two alpha chains (FadJ) and two beta chains (FadI).

The protein localises to the cytoplasm. It carries out the reaction an acyl-CoA + acetyl-CoA = a 3-oxoacyl-CoA + CoA. Its pathway is lipid metabolism; fatty acid beta-oxidation. Catalyzes the final step of fatty acid oxidation in which acetyl-CoA is released and the CoA ester of a fatty acid two carbons shorter is formed. The protein is 3-ketoacyl-CoA thiolase of Citrobacter koseri (strain ATCC BAA-895 / CDC 4225-83 / SGSC4696).